Consider the following 285-residue polypeptide: Transcription factor E2F6 (285 aa).

A Glycyl lysine isopeptide (Lys-Gly) (interchain with G-Cter in SUMO2) cross-link involves residue Lys9. Residues 50–129 (YVSMRKALKV…SKNHIRWIGS (80 aa)) mediate DNA binding. A DEF box motif is present at residues 95–129 (KLGVRKRRVYDITNVLDGIDLVEKKSKNHIRWIGS). Positions 130–222 (DLSNFGAVPQ…PAPKEDSITV (93 aa)) are dimerization. The interval 143–164 (LQEELSDLSAMEDALDELIKDC) is leucine-zipper. Positions 173–285 (DDKENERLAY…QSEEVLEVSN (113 aa)) are transcription repression. A disordered region spans residues 240 to 285 (QGSHSSNKTSDNVGTSSSKSKPLEHPQPEKEENPPQQSEEVLEVSN). Polar residues predominate over residues 241 to 259 (GSHSSNKTSDNVGTSSSKS). The span at 260-272 (KPLEHPQPEKEEN) shows a compositional bias: basic and acidic residues.

The protein belongs to the E2F/DP family. In terms of assembly, forms heterodimers with DP family members TFDP1 or TFDP2. Component of the DRTF1/E2F transcription factor complex. Part of the E2F6.com-1 complex in G0 phase composed of E2F6, MGA, MAX, TFDP1, CBX3, BAT8, EUHMTASE1, RING1, RNF2, MBLR, L3MBTL2 and YAF2. Component of some MLL1/MLL complex, at least composed of the core components KMT2A/MLL1, ASH2L, HCFC1/HCF1, WDR5 and RBBP5, as well as the facultative components BACC1, CHD8, E2F6, HSP70, INO80C, KANSL1, LAS1L, MAX, MCRS1, MGA, KAT8/MOF, PELP1, PHF20, PRP31, RING2, RUVB1/TIP49A, RUVB2/TIP49B, SENP3, TAF1, TAF4, TAF6, TAF7, TAF9 and TEX10.

It localises to the nucleus. In terms of biological role, inhibitor of E2F-dependent transcription. Binds DNA cooperatively with DP proteins through the E2 recognition site, 5'-TTTC[CG]CGC-3'. Has a preference for the 5'-TTTCCCGC-3' E2F recognition site. E2F6 lacks the transcriptional activation and pocket protein binding domains. Appears to regulate a subset of E2F-dependent genes whose products are required for entry into the cell cycle but not for normal cell cycle progression. Represses expression of some meiosis-specific genes, including SLC25A31/ANT4. May silence expression via the recruitment of a chromatin remodeling complex containing histone H3-K9 methyltransferase activity. Overexpression delays the exit of cells from the S-phase. The polypeptide is Transcription factor E2F6 (Bos taurus (Bovine)).